Consider the following 509-residue polypeptide: Sperm-associated antigen 6 (509 aa).

ARM repeat units follow at residues 31–70 (PQNI…RLAN), 73–112 (DDLA…AVGK), 115–154 (PQLA…YIAR), 157–196 (AELS…DIAK), 199–238 (PELA…QVSK), 241–280 (VDLA…EIAK), 325–365 (ENLA…QIGR), and 368–409 (PEHA…NILQ).

In terms of assembly, interacts with SPAG16 and SPAG17. Highly expressed in testis.

The protein localises to the cytoplasm. The protein resides in the cytoskeleton. Its subcellular location is the cell projection. It localises to the cilium. It is found in the flagellum. The protein localises to the cilium axoneme. Functionally, important for structural integrity of the central apparatus in the sperm tail and for flagellar motility. In Homo sapiens (Human), this protein is Sperm-associated antigen 6 (SPAG6).